Reading from the N-terminus, the 164-residue chain is uncharacterized protein (164 aa).

The interval 107 to 136 (QSESGGSGSNSRSSSDTTEPTDPPAPVRKT) is disordered.

This is an uncharacterized protein from Escherichia coli (Bacteriophage T4).